A 277-amino-acid polypeptide reads, in one-letter code: uncharacterized protein (277 aa).

The tract at residues 256-277 (HTTTTTTSPSFTIPSNSSKGVS) is disordered.

Functionally, this protein may be involved in virus assembly. Essential for virus function. This is an uncharacterized protein from Saccharolobus solfataricus (Sulfolobus solfataricus).